The primary structure comprises 170 residues: Protein HemX (170 aa).

A compositionally biased stretch (polar residues) spans Met1–Ser17. Residues Met1 to Arg24 are disordered. Residues Gly37–Tyr57 form a helical membrane-spanning segment.

It is found in the cell membrane. The chain is Protein HemX from Proteus mirabilis.